The following is a 625-amino-acid chain: Cytochrome c oxidase subunit 1 (625 aa).

A helical membrane pass occupies residues 23–43; it reads IAIMYLIAGTLFFVKAGVMAL. Residue H69 coordinates Fe(II)-heme a. A run of 6 helical transmembrane segments spans residues 72 to 92, 99 to 119, 151 to 171, 195 to 215, 240 to 260, and 272 to 292; these read IMLF…VIPL, VAFP…GLLL, FYVL…INFL, FISS…LALL, IFWI…FGII, and LFGY…GFMV. H246 and Y250 together coordinate Cu cation. A cross-link (1'-histidyl-3'-tyrosine (His-Tyr)) is located at residues 246–250; sequence HPEVY. H295 and H296 together coordinate Cu cation. 2 helical membrane-spanning segments follow: residues 309–329 and 343–363; these read IFAV…FNWL and MLFA…GVML. A heme a3-binding site is contributed by H381. 5 helical membrane-spanning segments follow: residues 382–402, 417–437, 460–480, 551–571, and 577–597; these read FHYI…FYWY, LFFW…HLLG, ISTI…INVI, SILP…LIML, and IINP…CMFV. H383 provides a ligand contact to Fe(II)-heme a.

This sequence belongs to the heme-copper respiratory oxidase family.

The protein localises to the cell membrane. It catalyses the reaction 4 Fe(II)-[cytochrome c] + O2 + 8 H(+)(in) = 4 Fe(III)-[cytochrome c] + 2 H2O + 4 H(+)(out). Its pathway is energy metabolism; oxidative phosphorylation. Cytochrome c oxidase is the component of the respiratory chain that catalyzes the reduction of oxygen to water. Subunits 1-3 form the functional core of the enzyme complex. CO I is the catalytic subunit of the enzyme. Electrons originating in cytochrome c are transferred via the copper A center of subunit 2 and heme A of subunit 1 to the bimetallic center formed by heme A3 and copper B. The sequence is that of Cytochrome c oxidase subunit 1 (ctaD) from Alkalihalophilus pseudofirmus (strain ATCC BAA-2126 / JCM 17055 / OF4) (Bacillus pseudofirmus).